Consider the following 457-residue polypeptide: UDP-N-acetylmuramate--L-alanyl-gamma-D-glutamyl-meso-2,6-diaminoheptandioate ligase (457 aa).

Residue 110-116 (GTHGKTT) participates in ATP binding.

The protein belongs to the MurCDEF family. Mpl subfamily. Requires Mg(2+) as cofactor.

The protein resides in the secreted. The catalysed reaction is UDP-N-acetyl-alpha-D-muramate + L-alanyl-gamma-D-glutamyl-meso-2,6-diaminopimelate + ATP = UDP-N-acetyl-alpha-D-muramoyl-L-alanyl-gamma-D-glutamyl-meso-2,6-diaminopimelate + ADP + phosphate + H(+). The protein operates within cell wall biogenesis; peptidoglycan recycling. Its function is as follows. Reutilizes the intact tripeptide L-alanyl-gamma-D-glutamyl-meso-diaminopimelate by linking it to UDP-N-acetylmuramate. The enzyme can also use the tetrapeptide L-alanyl-gamma-D-glutamyl-meso-2,6-diaminoheptanedioyl-D-alanine or the pentapeptide L-alanyl-gamma-D-glutamyl-meso-2,6-diaminoheptandioyl-D-alanyl-D-alanine in vivo and in vitro. The protein is UDP-N-acetylmuramate--L-alanyl-gamma-D-glutamyl-meso-2,6-diaminoheptandioate ligase of Escherichia coli (strain K12).